The chain runs to 141 residues: Nucleoside diphosphate kinase (141 aa).

K11, F59, R87, T93, R104, and N114 together coordinate ATP. The active-site Pros-phosphohistidine intermediate is H117.

Belongs to the NDK family. Homotetramer. Requires Mg(2+) as cofactor.

Its subcellular location is the cytoplasm. The enzyme catalyses a 2'-deoxyribonucleoside 5'-diphosphate + ATP = a 2'-deoxyribonucleoside 5'-triphosphate + ADP. It carries out the reaction a ribonucleoside 5'-diphosphate + ATP = a ribonucleoside 5'-triphosphate + ADP. Its function is as follows. Major role in the synthesis of nucleoside triphosphates other than ATP. The ATP gamma phosphate is transferred to the NDP beta phosphate via a ping-pong mechanism, using a phosphorylated active-site intermediate. The polypeptide is Nucleoside diphosphate kinase (Polynucleobacter asymbioticus (strain DSM 18221 / CIP 109841 / QLW-P1DMWA-1) (Polynucleobacter necessarius subsp. asymbioticus)).